The chain runs to 485 residues: Probable cobyric acid synthase (485 aa).

One can recognise a GATase cobBQ-type domain in the interval 250-435 (EVEIAVIRLP…LHGLFDNENI (186 aa)). Cys-328 serves as the catalytic Nucleophile. His-427 is an active-site residue.

It belongs to the CobB/CobQ family. CobQ subfamily.

Its pathway is cofactor biosynthesis; adenosylcobalamin biosynthesis. In terms of biological role, catalyzes amidations at positions B, D, E, and G on adenosylcobyrinic A,C-diamide. NH(2) groups are provided by glutamine, and one molecule of ATP is hydrogenolyzed for each amidation. The chain is Probable cobyric acid synthase from Methanosarcina acetivorans (strain ATCC 35395 / DSM 2834 / JCM 12185 / C2A).